Reading from the N-terminus, the 344-residue chain is Peroxidase 36 (344 aa).

A signal peptide spans 1–28 (MNTKTVKSMAGIVLSQISLVALFPLCIC). Cystine bridges form between Cys50–Cys130, Cys83–Cys88, Cys136–Cys337, and Cys215–Cys247. The active-site Proton acceptor is His81. Ca(2+)-binding residues include Asp82, Val85, Gly87, Asp89, and Ser91. Pro178 serves as a coordination point for substrate. His208 serves as a coordination point for heme b. Thr209 provides a ligand contact to Ca(2+). A glycan (N-linked (GlcNAc...) asparagine) is linked at Asn224. Asp260, Thr263, and Asp268 together coordinate Ca(2+).

It belongs to the peroxidase family. Classical plant (class III) peroxidase subfamily. Heme b is required as a cofactor. It depends on Ca(2+) as a cofactor.

The protein resides in the secreted. The catalysed reaction is 2 a phenolic donor + H2O2 = 2 a phenolic radical donor + 2 H2O. In terms of biological role, removal of H(2)O(2), oxidation of toxic reductants, biosynthesis and degradation of lignin, suberization, auxin catabolism, response to environmental stresses such as wounding, pathogen attack and oxidative stress. These functions might be dependent on each isozyme/isoform in each plant tissue. The protein is Peroxidase 36 (PER36) of Arabidopsis thaliana (Mouse-ear cress).